The following is a 171-amino-acid chain: Peptide deformylase (171 aa).

Fe cation contacts are provided by cysteine 91 and histidine 133. Glutamate 134 is a catalytic residue. Histidine 137 lines the Fe cation pocket.

Belongs to the polypeptide deformylase family. Requires Fe(2+) as cofactor.

The catalysed reaction is N-terminal N-formyl-L-methionyl-[peptide] + H2O = N-terminal L-methionyl-[peptide] + formate. Functionally, removes the formyl group from the N-terminal Met of newly synthesized proteins. Requires at least a dipeptide for an efficient rate of reaction. N-terminal L-methionine is a prerequisite for activity but the enzyme has broad specificity at other positions. This chain is Peptide deformylase, found in Sodalis glossinidius (strain morsitans).